We begin with the raw amino-acid sequence, 121 residues long: C-X-C motif chemokine 11-6 (121 aa).

The first 20 residues, 1-20, serve as a signal peptide directing secretion; it reads MKTLAAFLLLSCLIAGEVNG. 2 disulfides stabilise this stretch: Cys29/Cys56 and Cys31/Cys73. The segment at 95–121 is disordered; that stretch reads QSVPHSTTTGTVKSSMTSSTSAPTAFK. Positions 100–115 are enriched in low complexity; the sequence is STTTGTVKSSMTSSTS.

It belongs to the intercrine alpha (chemokine CxC) family.

It is found in the secreted. Ligand for cxcr3.2. Chemotactic for macrophages. In Danio rerio (Zebrafish), this protein is C-X-C motif chemokine 11-6.